Reading from the N-terminus, the 599-residue chain is Dual specificity tyrosine-phosphorylation-regulated kinase 2 (599 aa).

The segment at 1–55 (MLTRKPSAAAPAAYPTGRGGDTAVRQLQASPGIGAGAPRSGVGTGPPSPIALPPL) is disordered. Ser30 is subject to Phosphoserine. Phosphothreonine; by ATM is present on Thr104. The short motif at 187–189 (KKR) is the Nuclear localization signal element. Residues 220–533 (YEVLKVIGKG…PGQALRHPWL (314 aa)) enclose the Protein kinase domain. ATP contacts are provided by residues 226 to 234 (IGKGSFGQV), Lys249, and 299 to 302 (FELL). The active-site Proton acceptor is the Asp346. Position 379 is a phosphothreonine; by MAP3K10 (Thr379). A Phosphotyrosine; by autocatalysis modification is found at Tyr380. A Phosphoserine; by ATM modification is found at Ser440. Residue Ser447 is modified to Phosphoserine; by MAP3K10.

It belongs to the protein kinase superfamily. CMGC Ser/Thr protein kinase family. MNB/DYRK subfamily. In terms of assembly, component of an E3 ligase complex containing DYRK2, EDD/UBR5, DDB1 and DCAF1 (EDVP complex). Interacts directly with EDD/UBR5, DDB1 and DCAF1. Interacts with SIAH2 and MDM2. Interacts with MAP3K10 and NFATC1. May also interact with CCNL2. The cofactor is Mg(2+). It depends on Mn(2+) as a cofactor. Autophosphorylates cotranslationally on the second tyrosine residue in the Tyr-X-Tyr motif in the activation loop, but once mature, does not have any protein tyrosine kinase activity. Phosphorylated at Thr-104 and Ser-440 by ATM in response to genotoxic stress. Post-translationally, under normal conditions, polyubiquitinated in the nucleus by MDM2, leading to its proteasomal degradation. Phosphorylation on Thr-104 and Ser-440 by ATM in response to genotoxic stress disrupts MDM2 binding and prevents MDM2-mediated ubiquitination and subsequent proteasomal degradation. Polyubiquitinated by SIAH2, leading to its proteasomal degradation. Polyubiquitinated by SIAH2 occurs under normal conditions, and is enhanced in response to hypoxia.

It is found in the cytoplasm. Its subcellular location is the nucleus. It catalyses the reaction L-seryl-[protein] + ATP = O-phospho-L-seryl-[protein] + ADP + H(+). It carries out the reaction L-threonyl-[protein] + ATP = O-phospho-L-threonyl-[protein] + ADP + H(+). The catalysed reaction is L-tyrosyl-[protein] + ATP = O-phospho-L-tyrosyl-[protein] + ADP + H(+). With respect to regulation, activated by autophosphorylation on the second tyrosine residue in the Tyr-X-Tyr motif in the activation loop. Functionally, serine/threonine-protein kinase involved in the regulation of the mitotic cell cycle, cell proliferation, apoptosis, organization of the cytoskeleton and neurite outgrowth. Functions in part via its role in ubiquitin-dependent proteasomal protein degradation. Functions downstream of ATM and phosphorylates p53/TP53 at 'Ser-46', and thereby contributes to the induction of apoptosis in response to DNA damage. Phosphorylates NFATC1, and thereby inhibits its accumulation in the nucleus and its transcription factor activity. Phosphorylates EIF2B5 at 'Ser-544', enabling its subsequent phosphorylation and inhibition by GSK3B. Likewise, phosphorylation of NFATC1, CRMP2/DPYSL2 and CRMP4/DPYSL3 promotes their subsequent phosphorylation by GSK3B. May play a general role in the priming of GSK3 substrates. Inactivates GYS1 by phosphorylation at 'Ser-641', and potentially also a second phosphorylation site, thus regulating glycogen synthesis. Mediates EDVP E3 ligase complex formation and is required for the phosphorylation and subsequent degradation of KATNA1. Phosphorylates TERT at 'Ser-457', promoting TERT ubiquitination by the EDVP complex. Phosphorylates SIAH2, and thereby increases its ubiquitin ligase activity. Promotes the proteasomal degradation of MYC and JUN, and thereby regulates progress through the mitotic cell cycle and cell proliferation. Promotes proteasomal degradation of GLI2 and GLI3, and thereby plays a role in smoothened and sonic hedgehog signaling. Phosphorylates CRMP2/DPYSL2, CRMP4/DPYSL3, DCX, EIF2B5, EIF4EBP1, GLI2, GLI3, GYS1, JUN, MDM2, MYC, NFATC1, p53/TP53, TAU/MAPT and KATNA1. Can phosphorylate histone H1, histone H3 and histone H2B (in vitro). Can phosphorylate CARHSP1 (in vitro). Plays a role in cytoskeleton organization and neurite outgrowth via its phosphorylation of DCX. This chain is Dual specificity tyrosine-phosphorylation-regulated kinase 2, found in Mus musculus (Mouse).